We begin with the raw amino-acid sequence, 467 residues long: Citrate synthase, mitochondrial (467 aa).

Residues H301 and H347 contribute to the active site.

This sequence belongs to the citrate synthase family.

Its subcellular location is the mitochondrion matrix. The enzyme catalyses oxaloacetate + acetyl-CoA + H2O = citrate + CoA + H(+). It participates in carbohydrate metabolism; tricarboxylic acid cycle; isocitrate from oxaloacetate: step 1/2. This is Citrate synthase, mitochondrial (CIT) from Candida tropicalis (Yeast).